Consider the following 146-residue polypeptide: Large ribosomal subunit protein bL19 (146 aa).

Positions 116 to 146 (ADRKRIDQDRAAERAAKEEAQKAQEPKASQE) are disordered. Residues 119 to 146 (KRIDQDRAAERAAKEEAQKAQEPKASQE) are compositionally biased toward basic and acidic residues.

In terms of assembly, part of the 50S risobomal subunit. Contacts protein L14. Forms a bridge to the 30S subunit in the 70S ribosome, contacting the 16S rRNA.

In terms of biological role, contacts the 16S rRNA of the 30S subunit (part of bridge B6), connecting the 2 subunits. The chain is Large ribosomal subunit protein bL19 (rplS) from Thermus thermophilus (strain ATCC 27634 / DSM 579 / HB8).